The following is a 436-amino-acid chain: ATP-dependent RNA helicase RhlB (436 aa).

A Q motif motif is present at residues 9–37 (QKFADLDLLPQVIEGLEKKGFDYCTPIQA). The 180-residue stretch at 40-219 (LPVLLTGQDI…FEHMHNPEHV (180 aa)) folds into the Helicase ATP-binding domain. Residue 53–60 (AQTGTGKT) participates in ATP binding. The DEAD box signature appears at 165–168 (DEAD). The Helicase C-terminal domain maps to 245–390 (ALLQTLIEEE…MSDYDASALL (146 aa)). The tract at residues 398–436 (RLRTRNPQQRRSNNNGPRNGNRKPNQNRRPRQPRHNKEA) is disordered. The segment covering 402–421 (RNPQQRRSNNNGPRNGNRKP) has biased composition (low complexity). The span at 422–436 (NQNRRPRQPRHNKEA) shows a compositional bias: basic residues.

This sequence belongs to the DEAD box helicase family. RhlB subfamily. As to quaternary structure, component of the RNA degradosome, which is a multiprotein complex involved in RNA processing and mRNA degradation.

It localises to the cytoplasm. The enzyme catalyses ATP + H2O = ADP + phosphate + H(+). DEAD-box RNA helicase involved in RNA degradation. Has RNA-dependent ATPase activity and unwinds double-stranded RNA. This Vibrio atlanticus (strain LGP32) (Vibrio splendidus (strain Mel32)) protein is ATP-dependent RNA helicase RhlB.